The following is a 371-amino-acid chain: LIM domain-binding protein 2 (371 aa).

2 disordered regions span residues 244–289 and 325–371; these read APPA…AAAN and QYDA…QASQ. A compositionally biased stretch (low complexity) spans 263–289; the sequence is STSSTSNSSAGNNANSTNSKKKSAAAN. An LIM interaction domain (LID) domain is found at 296-335; that stretch reads DVMVVGEPTLMGGEFGDEDERLITRLENTQYDAANGMDDE. Residues 339–371 are compositionally biased toward polar residues; sequence NNSPALGNNSPWNSKPPANQETKSENPTPQASQ.

Belongs to the LDB family. As to expression, first expressed at stages 15-16 in presumptive limb mesoderm. As limb outgrowth proceeds, expressed in the entire limb bud, concentrating in the distal mesoderm throughout limb development. Both hindlimbs and forelimbs exhibit similar expression patterns.

It localises to the nucleus. Binds to the LIM domain of a wide variety of LIM domain-containing transcription factors. The sequence is that of LIM domain-binding protein 2 (LDB2) from Gallus gallus (Chicken).